Reading from the N-terminus, the 185-residue chain is HTH-type transcriptional regulator SACOL2593 (185 aa).

Positions 6-66 constitute an HTH tetR-type domain; sequence KENRQRIEEI…YVIQRDLDIF (61 aa). The segment at residues 29 to 48 is a DNA-binding region (H-T-H motif); it reads SMNRIAKELGIGMGTLYRHF.

In Staphylococcus aureus (strain COL), this protein is HTH-type transcriptional regulator SACOL2593.